The sequence spans 652 residues: DNA ligase (652 aa).

Residues 29 to 33 (DAEYD), 78 to 79 (SL), and E107 contribute to the NAD(+) site. Residue K109 is the N6-AMP-lysine intermediate of the active site. Positions 130, 164, 278, and 302 each coordinate NAD(+). 4 residues coordinate Zn(2+): C395, C398, C413, and C418. In terms of domain architecture, BRCT spans 577–652 (ADDAILSGKT…VKDEAWLLDL (76 aa)).

The protein belongs to the NAD-dependent DNA ligase family. LigA subfamily. Mg(2+) serves as cofactor. The cofactor is Mn(2+).

The catalysed reaction is NAD(+) + (deoxyribonucleotide)n-3'-hydroxyl + 5'-phospho-(deoxyribonucleotide)m = (deoxyribonucleotide)n+m + AMP + beta-nicotinamide D-nucleotide.. Its function is as follows. DNA ligase that catalyzes the formation of phosphodiester linkages between 5'-phosphoryl and 3'-hydroxyl groups in double-stranded DNA using NAD as a coenzyme and as the energy source for the reaction. It is essential for DNA replication and repair of damaged DNA. In Streptococcus thermophilus (strain CNRZ 1066), this protein is DNA ligase.